The chain runs to 221 residues: MALWRGLRAVLAVAGLAVAVQLLRGWLGSKSYVFNREEIARLAKEHSGLDYEVAFSKIITELRKKHPGRILPDEDLQWVFVNAGGWMGSMCLLHASLTEYVLLFGTAVDTSGHSGRYWAEISDTILSGTFRQWKEGSTKSEIFYPGDTIVHEVGEATSVQWSAGTWMVEYGRGFIPSTLGFALADTIFSTQDFLTLFYTVKVYGKALLLETSTHLSELGFF.

Residues 1-4 (MALW) lie on the Lumenal side of the membrane. The helical transmembrane segment at 5–27 (RGLRAVLAVAGLAVAVQLLRGWL) threads the bilayer. Residues 28–221 (GSKSYVFNRE…STHLSELGFF (194 aa)) lie on the Cytoplasmic side of the membrane. The tract at residues 96-103 (SLTEYVLL) is important for ligand-binding. Positions 174 to 221 (FIPSTLGFALADTIFSTQDFLTLFYTVKVYGKALLLETSTHLSELGFF) are C-terminal hydrophobic region.

It belongs to the ERG2 family. As to quaternary structure, homotrimer.

It localises to the nucleus inner membrane. Its subcellular location is the nucleus outer membrane. The protein resides in the nucleus envelope. The protein localises to the cytoplasmic vesicle. It is found in the endoplasmic reticulum membrane. It localises to the membrane. In terms of biological role, may function in lipid transport from the endoplasmic reticulum and be involved in a wide array of cellular functions probably through regulation of the biogenesis of lipid microdomains at the plasma membrane. May regulate calcium efflux at the endoplasmic reticulum. In Xenopus tropicalis (Western clawed frog), this protein is Sigma non-opioid intracellular receptor 1 (sigmar1).